A 97-amino-acid chain; its full sequence is Co-chaperonin GroES (97 aa).

This sequence belongs to the GroES chaperonin family. As to quaternary structure, heptamer of 7 subunits arranged in a ring. Interacts with the chaperonin GroEL.

The protein localises to the cytoplasm. In terms of biological role, together with the chaperonin GroEL, plays an essential role in assisting protein folding. The GroEL-GroES system forms a nano-cage that allows encapsulation of the non-native substrate proteins and provides a physical environment optimized to promote and accelerate protein folding. GroES binds to the apical surface of the GroEL ring, thereby capping the opening of the GroEL channel. This Nocardioides sp. (strain ATCC BAA-499 / JS614) protein is Co-chaperonin GroES.